A 277-amino-acid chain; its full sequence is Putative phosphoenolpyruvate synthase regulatory protein (277 aa).

Position 157–164 (157–164 (GVSRSGKT)) interacts with ADP.

The protein belongs to the pyruvate, phosphate/water dikinase regulatory protein family. PSRP subfamily.

The catalysed reaction is [pyruvate, water dikinase] + ADP = [pyruvate, water dikinase]-phosphate + AMP + H(+). It catalyses the reaction [pyruvate, water dikinase]-phosphate + phosphate + H(+) = [pyruvate, water dikinase] + diphosphate. Its function is as follows. Bifunctional serine/threonine kinase and phosphorylase involved in the regulation of the phosphoenolpyruvate synthase (PEPS) by catalyzing its phosphorylation/dephosphorylation. This chain is Putative phosphoenolpyruvate synthase regulatory protein, found in Vibrio vulnificus (strain CMCP6).